The primary structure comprises 748 residues: Phosphoenolpyruvate-dependent phosphotransferase system (748 aa).

A GAF domain is found at 1 to 127; the sequence is MLTRLREIVE…RRQLLGVLVV (127 aa). Residues 128 to 170 are linker; it reads QQRELRQYDESEESFLVTLATQMAAILSQSQLTALFGQYRQTR. A PTS EI region spans residues 171–748; it reads IRALPAAPGV…GMGGLIRGGL (578 aa). Catalysis depends on His356, which acts as the Tele-phosphohistidine intermediate. Arg462 and Arg498 together coordinate phosphoenolpyruvate. Mg(2+) contacts are provided by Glu597 and Asp621. Phosphoenolpyruvate is bound by residues 620–621 and Arg631; that span reads ND. The active-site Proton donor is Cys668.

This sequence belongs to the PEP-utilizing enzyme family. Mg(2+) is required as a cofactor.

The protein resides in the cytoplasm. The enzyme catalyses L-histidyl-[protein] + phosphoenolpyruvate = N(pros)-phospho-L-histidyl-[protein] + pyruvate. Inhibited by GDP and FAD. Functionally, component of the phosphoenolpyruvate-dependent nitrogen-metabolic phosphotransferase system (nitrogen-metabolic PTS), that seems to be involved in regulating nitrogen metabolism. Enzyme I-Ntr transfers the phosphoryl group from phosphoenolpyruvate (PEP) to the phosphoryl carrier protein (NPr). Could function in the transcriptional regulation of sigma-54 dependent operons in conjunction with the NPr (PtsO) and EIIA-Ntr (PtsN) proteins. Enzyme I-Ntr is specific for NPr. This chain is Phosphoenolpyruvate-dependent phosphotransferase system (ptsP), found in Escherichia coli (strain K12).